The sequence spans 327 residues: Malate dehydrogenase (327 aa).

12-18 (GAAGQIG) lines the NAD(+) pocket. 2 residues coordinate substrate: R93 and R99. NAD(+)-binding positions include N106, Q113, and 130-132 (VGN). Positions 132 and 163 each coordinate substrate. The active-site Proton acceptor is H188.

It belongs to the LDH/MDH superfamily. MDH type 2 family.

The enzyme catalyses (S)-malate + NAD(+) = oxaloacetate + NADH + H(+). Functionally, catalyzes the reversible oxidation of malate to oxaloacetate. The chain is Malate dehydrogenase from Cupriavidus necator (strain ATCC 17699 / DSM 428 / KCTC 22496 / NCIMB 10442 / H16 / Stanier 337) (Ralstonia eutropha).